Consider the following 193-residue polypeptide: MAAIRKKLVIVGDGACGKTCLLIVFSKDQFPEVYVPTVFENYIADIEVDSKQVELALWDTAGQEDYDRLRPLSYPDTDVILMCFSVDSPDSLENIPEKWTPEVKHFCPNVPIILVGNKKDLRNDEHTRRELIKMKQEPVKPEEGRDMANRISAFGYLECSAKTKDGVREVFEMATRAALQVRKRKKRSGCLLL.

GTP is bound by residues 12–19 (GDGACGKT), 30–37 (FPEVYVPT), 59–63 (DTAGQ), 117–120 (NKKD), and 160–162 (SAK). (Microbial infection) O-linked (GlcNAc) tyrosine; by Yersinia Afp18 glycosylation is present at Y34. At C190 the chain carries Cysteine methyl ester. C190 carries the S-geranylgeranyl cysteine lipid modification. Residues 191-193 (LLL) constitute a propeptide, removed in mature form.

It belongs to the small GTPase superfamily. Rho family. Post-translationally, (Microbial infection) Glycosylated at Tyr-34 by Yersinia ruckeri toxin Afp18. Mono-O-GlcNAcylation by Afp18 inhibits RhoA activation by guanine nucleotide exchange factors and blocks RhoA signaling.

It localises to the cell membrane. In terms of biological role, regulates a signal transduction pathway linking plasma membrane receptors to the assembly of focal adhesions and actin stress fibers. This chain is Rho-related GTP-binding protein RhoA-D, found in Danio rerio (Zebrafish).